A 348-amino-acid polypeptide reads, in one-letter code: GTP 3',8-cyclase (348 aa).

The 219-residue stretch at 24 to 242 (PFGRAVTYLR…EKQFTLTDID (219 aa)) folds into the Radical SAM core domain. Arginine 33 contributes to the GTP binding site. Residues cysteine 40 and cysteine 44 each coordinate [4Fe-4S] cluster. Tyrosine 46 contributes to the S-adenosyl-L-methionine binding site. Cysteine 47 is a binding site for [4Fe-4S] cluster. Position 82 (arginine 82) interacts with GTP. Position 86 (glycine 86) interacts with S-adenosyl-L-methionine. Position 115 (threonine 115) interacts with GTP. Serine 139 is an S-adenosyl-L-methionine binding site. Residue lysine 175 coordinates GTP. Methionine 209 is an S-adenosyl-L-methionine binding site. [4Fe-4S] cluster is bound by residues cysteine 272 and cysteine 275. 277-279 (RVR) lines the GTP pocket. Position 289 (cysteine 289) interacts with [4Fe-4S] cluster.

This sequence belongs to the radical SAM superfamily. MoaA family. As to quaternary structure, monomer and homodimer. [4Fe-4S] cluster serves as cofactor.

The catalysed reaction is GTP + AH2 + S-adenosyl-L-methionine = (8S)-3',8-cyclo-7,8-dihydroguanosine 5'-triphosphate + 5'-deoxyadenosine + L-methionine + A + H(+). It functions in the pathway cofactor biosynthesis; molybdopterin biosynthesis. In terms of biological role, catalyzes the cyclization of GTP to (8S)-3',8-cyclo-7,8-dihydroguanosine 5'-triphosphate. In Rhizobium leguminosarum bv. trifolii (strain WSM2304), this protein is GTP 3',8-cyclase.